The chain runs to 2637 residues: MADGADYTQRNIHSLDSSLDLDRFCASLHQVVASNQILRTRIVDCPLGLVQVIVKSEAFIDCLSRPCNADVEQYLRQDEMSPMHLGMPLARFAIVGRKLVTTIHHAIADSHSLLYLYEDAWKIYQGESPPPRAPFREFVDYCKSIDSKSAAAFWKSQFSESAPGVFPTVPSGHLIKASQTAAHTISLAKKPPLPLLPAYIEAAWAMTAADYTGSENVVFGYVMSGRTAIGGAETTLGPTISTVPMQVQLNASASIEQLLKSRTQFRRSLLASPFLQYGLANIRHTVSDEAHVASGFQTLLDILSVDETQANAPGLTLERTIHTYVHGLTLMCKIAGEDILVRADFDSIVLPDAQVQRILRQMEHRLKALIRSPPSTELRNLSPLNLSDTIEILDWNSDVPDAVNQCVHDIFTSQASRRPDAAAVHAWDGQATYHELDVMSDNLAHELLLRKISPEVPIAFTLERSLSAVVAVLGIMKAGGACLPIELSFPRARKDAIVRVVGARLIVTSSTHEAVEGCESIILDLHRVAHRGVDIRRRINRDPARAAYILFTSGSTGEPKGVVLEHRSLATSYTAICNRVGWSSGTRILQFSSPAWDAFALEVLGPLMVGGCICIPSNISRESALGEYINSARVDSVLQTPTALRNLTPDDMLPSLKSLLVGGEPIPENAYKTWGSKVRLYNIWAPCETSTISTIADLSPLSVYPTSIGTPVGSAVWIVDRDDPSKLLPIGAVGEMLVEGPGVARGYHNNPTQTAPSFISPPPFIPMRPNASSPKVYRTGDLARYNPDGSIAFVGRRDNQIKLRGQRFEMEDVEQVLGRHGCTCAVAVVNFKLPRQEREDLVAFVTLSAVPGYHPSPQSTDDELPAVPLNEDIRNQLQTLHDFTRGQLPPYMVPTAWVVVRHLPKLTSTKIDRVKLRQWLHEVDLSSARVIMRQFGDGRRTHGLTPPANPPERALQLAWSSVLGVEEGHIGRESSFLSLGGDSITAMQVASRCHKQGFSIRSTALLRAGTLAEAASEIKEPTDASAPSPSPISRDLPLQKSNHDRGLQGHLHPTSLCVPRDNVEAIYPCTALQEGLLLARMKHNGDEREYNNRFAFRLTTRCGIKVDITRVSNAWKALCAAHPILRTIFVPGLSQNGAFQQIVLKDSAPSISIHRVQANCSDTTELFRHQERLPFAHTQPPHRLSLYEGVGKAVYAILEISHAIFDARTLRIILANIATGYTSCRAIKKGRSFSDYVAREQEREEVGRQYWKTYLAGAQPCILPRDSAMEETSSSIRGLEVPCQNAPGLLAFCRSQGVTIANFIQAAWGVVLQLYTGLSSVYFGCSRSDQDRLDGGEDILGPLITMMVCKFSFEDRSVSGVHLLQIAREDAARGMEQPGCSLSRLHDDLALSNSPLFDTIMTVAHAWPTDLAPGEGDLVIEHTDSEGTTEYSIIVTVGYSKDSLNIHLAYQRARLSDSLVECIARTFAQVITRIIASPEESVLQALQPERPESCLTLSRADMSLLQRWNTPAPLAFKECFPQRAREVAHQRPLAPAVCSWDQNLDYCQLDLLSDYLAHKIIAQYGIGAEAVVPFACEKAASAIVILLAISKTGAAFLPLDITHPPERLATVVADSGASLIIVNTPELRNKMAAWTRQSIFLARLDDIVEETSVEQTLKIRSDLKSVTIEPSNAAYVVYTSGSTGKPKGVLVEHGNLAVGAEEHARRIGITARSRVLQLASFAFDLAIGDVVYALCSGACLCVPSESDRNGNIAGVINRLHANFLFTTPTQLSVLTPEEVPTLRTVSVGGEPVGRQIIETWTPHVRLVIPYGPVETTIIVSCRDVTSGDQDGRDIGHPSSCRFWVVDPDNRDSLVPIGTPGELVIEGPVVARGYLHTSDATGSAFIDPPAWSNAQEFASLNLASRRFYKTGDLVTQVGEKSFLIEGRKDTRVKLHGQRVELGEIEYHLSHRVEPGWHWAVDIIQPRGGKDPCLAAFFVTDKSNIMETPTPASGHELLEPLAEHASAAKETLKHVLPAYMVPEYFIRIRALPMLSSLKTDRKALRTMAAGLSRAELLAYRVRESVSNIGHAHSNPAKTQKEVTDDQAFMQQAWADVLGISSDEIGCGDNFFDIGGNSIRAIHLIARLRKSGHKLSVEEVFRARTLAYMVSKTSVSNAQSGDQPTSTPPAALDTESIPHLMHLAEKFPWLQRDNIESVAPATDAQAWMLDVSERAGRGFDNGLTLIPLPGHALSRPKLQRACQEVLRQHPILRTVFVCCESQVLQVALRKPPIEQVHTDKGPPKLSSSSILNRLPTFYLTSDSGSTSCRSLELRIHHALYDAISLGHLLDDLGAAYKGRDLVTRPTQYHEWISHIKAKETTDTYIFWRELLRGSMPRSLVSRRSNWSAPGNPTDSKICFKTRVDAIPVSYGTDATVFNAAWSLVLSQVLEKQDVVFGYISANRSCALPGVDQIVGPCINILPVHARCNGDITAASLVAELQRQSTDSIPHQHVGLLSILKNSTDWPKGTLNSLVAFQNHEAIDDIVKLGDVDCALSANGRVGNSAEVCLGIEPQPDGQVGITLQYSSVSMPHEKVLWMGAYLDAALHAFPTHWTKTIDQLRHHIDANCNFPRPPENGELKGGAIPHNNAGTGRFIIEAAS.

The condensation 1 stretch occupies residues 1–376 (MADGADYTQR…KALIRSPPST (376 aa)). The adenylation 1 stretch occupies residues 413-803 (SQASRRPDAA…VGRRDNQIKL (391 aa)). The Carrier 1 domain occupies 946–1022 (PPANPPERAL…EAASEIKEPT (77 aa)). S983 carries the O-(pantetheine 4'-phosphoryl)serine modification. Residues 1016 to 1045 (SEIKEPTDASAPSPSPISRDLPLQKSNHDR) are disordered. Residues 1063 to 1506 (VEAIYPCTAL…LSRADMSLLQ (444 aa)) form a condensation 2 region. An adenylation 2 region spans residues 1524-1933 (AREVAHQRPL…EGRKDTRVKL (410 aa)). The 77-residue stretch at 2078 to 2154 (KEVTDDQAFM…YMVSKTSVSN (77 aa)) folds into the Carrier 2 domain. An O-(pantetheine 4'-phosphoryl)serine modification is found at S2115. The condensation 3 stretch occupies residues 2193 to 2582 (ESVAPATDAQ…LWMGAYLDAA (390 aa)).

Belongs to the NRP synthetase family.

It functions in the pathway secondary metabolite biosynthesis. Nonribisomal peptide synthetase; part of the gene cluster that mediates the biosynthesis of valactamides. The first step of the pathway is performed by the highly reducing polyketide synthase valA that produces the polyketide part of the final products. An acetyl starter unit is incorporated by the ketosynthase domain of valA, and subsequently 6 malonyl-CoA-derived ketide units are incorporated and fully reduced to their respective alkane forms by the action of the ketoreductase, dehydratase, and enoylreductase domains (except for the penultimate unit, which is reduced only to the alkene). The final five ketide units are each proposed to be alpha-methylated by the methyltransferase domain before ketone reduction by the ketoreductase domain. The C1 domain of the nonribisomal peptide synthetase valB then catalyzes amide bond formation between the heptaketide chain and L-valine (L-Val) attached to the T1 domain. The C2 domain incorporating L-isoleucine (L-Ile) then carries out chain elongation, which is followed by macrolactonization by the Ct domain to release the final product. In Aspergillus terreus, this protein is Nonribisomal peptide synthetase valB.